Consider the following 1231-residue polypeptide: S-layer protein A (1231 aa).

Residues 1–35 form the signal peptide; it reads MNKTLGLILTSVFLLSTLGIITGFVIPTQAANSND.

This sequence belongs to the Sulfolobales SlaA family. In terms of assembly, the mushroom-shaped unit cells of the Sulfolobales' S-layers may consist of three SlaB subunits and six SlaA subunits.

The protein localises to the secreted. It is found in the cell wall. The protein resides in the S-layer. S-layer large protein. May form the highly ordered outer sheath. In Saccharolobus solfataricus (strain ATCC 35092 / DSM 1617 / JCM 11322 / P2) (Sulfolobus solfataricus), this protein is S-layer protein A.